We begin with the raw amino-acid sequence, 445 residues long: UPF0210 protein SSU05_0296 (445 aa).

This sequence belongs to the UPF0210 family. As to quaternary structure, homodimer.

The protein is UPF0210 protein SSU05_0296 of Streptococcus suis (strain 05ZYH33).